The sequence spans 167 residues: Bacterial non-heme ferritin-like protein (167 aa).

Residues Met-1–Lys-145 enclose the Ferritin-like diiron domain.

This sequence belongs to the ferritin family. Prokaryotic subfamily.

The protein localises to the cytoplasm. In Escherichia coli O157:H7, this protein is Bacterial non-heme ferritin-like protein (ftnB).